Consider the following 376-residue polypeptide: N-acetyldiaminopimelate deacetylase (376 aa).

Residue Asp69 is part of the active site. Catalysis depends on Glu128, which acts as the Proton acceptor.

The protein belongs to the peptidase M20A family. N-acetyldiaminopimelate deacetylase subfamily.

It carries out the reaction N-acetyl-(2S,6S)-2,6-diaminopimelate + H2O = (2S,6S)-2,6-diaminopimelate + acetate. The protein operates within amino-acid biosynthesis; L-lysine biosynthesis via DAP pathway; LL-2,6-diaminopimelate from (S)-tetrahydrodipicolinate (acetylase route): step 3/3. Its function is as follows. Catalyzes the conversion of N-acetyl-diaminopimelate to diaminopimelate and acetate. The polypeptide is N-acetyldiaminopimelate deacetylase (Bacillus cereus (strain AH820)).